The chain runs to 1832 residues: Multifunctional protein pyr-3 (1832 aa).

Positions 2–400 (AATVYRPATA…PGPRDTEFLF (399 aa)) are GATase (Glutamine amidotransferase). 3 residues coordinate L-glutamine: S64, G273, and G275. Residues 228 to 413 (RILCLDVGMK…IQTVAKCTTD (186 aa)) enclose the Glutamine amidotransferase type-1 domain. C302 acts as the Nucleophile; for GATase activity in catalysis. 5 residues coordinate L-glutamine: L303, Q306, N344, G346, and Y347. Residues H386 and E388 each act as for GATase activity in the active site. Positions 401–442 (DVFIQTVAKCTTDNTLLQKGVEFPGGTTEENERLHPRVDVKK) are linker. A CPSase A region spans residues 443 to 983 (VLVLGSGGLS…SEHDVSFEDR (541 aa)). The tract at residues 443–1484 (VLVLGSGGLS…TNVKNAKILV (1042 aa)) is CPSase (Carbamoyl phosphate synthase). Residues R560, R600, G606, G607, R637, M639, E644, G670, I671, H672, Q713, and E727 each contribute to the ATP site. 2 ATP-grasp domains span residues 564-756 (ARSM…KLGL) and 1102-1293 (SRML…KAIM). Mg(2+) is bound by residues Q713, E727, and N729. 3 residues coordinate Mn(2+): Q713, E727, and N729. The CPSase B stretch occupies residues 984–1484 (GVMVLGSGVY…TNVKNAKILV (501 aa)). R1138, K1177, I1179, E1184, G1209, V1210, H1211, S1212, Q1252, and E1264 together coordinate ATP. The Mg(2+) site is built by Q1252, E1264, and N1266. Mn(2+) is bound by residues Q1252, E1264, and N1266. The 149-residue stretch at 1359–1507 (FKVPKKNILL…RDYQTSHTPL (149 aa)) folds into the MGS-like domain. Positions 1485–1528 (EAIARYRDMEIGERDYQTSHTPLQLSGQVNFTLQDSLSRPHSFK) are linker. An ATCase (Aspartate transcarbamylase) region spans residues 1529–1832 (KAHVLSVEQY…MALLALVMSG (304 aa)). Carbamoyl phosphate contacts are provided by R1581 and T1582. K1609 contributes to the L-aspartate binding site. Residues R1630, H1658, and Q1661 each coordinate carbamoyl phosphate. L-aspartate is bound by residues R1691 and R1754. Carbamoyl phosphate is bound by residues L1793 and P1794.

It in the N-terminal section; belongs to the CarA family. In the central section; belongs to the CarB family. This sequence in the C-terminal section; belongs to the aspartate/ornithine carbamoyltransferase superfamily. ATCase family. The cofactor is Mg(2+). Mn(2+) serves as cofactor.

It is found in the cytoplasm. It localises to the nucleus. The catalysed reaction is hydrogencarbonate + L-glutamine + 2 ATP + H2O = carbamoyl phosphate + L-glutamate + 2 ADP + phosphate + 2 H(+). It carries out the reaction L-glutamine + H2O = L-glutamate + NH4(+). It catalyses the reaction hydrogencarbonate + NH4(+) + 2 ATP = carbamoyl phosphate + 2 ADP + phosphate + 2 H(+). The enzyme catalyses carbamoyl phosphate + L-aspartate = N-carbamoyl-L-aspartate + phosphate + H(+). It functions in the pathway pyrimidine metabolism; UMP biosynthesis via de novo pathway; (S)-dihydroorotate from bicarbonate: step 1/3. It participates in pyrimidine metabolism; UMP biosynthesis via de novo pathway; (S)-dihydroorotate from bicarbonate: step 2/3. Both CPSase and ATCase activities are feedback inhibited by the end product UTP. In terms of biological role, multifunctional protein that encodes the first 2 enzymatic activities of the de novo pyrimidine pathway: carbamoylphosphate synthetase (CPSase; EC 6.3.5.5) and aspartate transcarbamylase (ATCase; EC 2.1.3.2). The CPSase-function is accomplished in 2 steps, by a glutamine-dependent amidotransferase activity (GATase) that binds and cleaves glutamine to produce ammonia, followed by an ammonium-dependent carbamoyl phosphate synthetase, which reacts with the ammonia, hydrogencarbonate and ATP to form carbamoyl phosphate. The endogenously produced carbamoyl phosphate is sequestered and channeled to the ATCase active site. ATCase then catalyzes the formation of carbamoyl-L-aspartate from L-aspartate and carbamoyl phosphate. This is Multifunctional protein pyr-3 (pyr-3) from Neurospora crassa (strain ATCC 24698 / 74-OR23-1A / CBS 708.71 / DSM 1257 / FGSC 987).